The following is a 207-amino-acid chain: Anthranilate synthase component II (207 aa).

The Glutamine amidotransferase type-1 domain occupies R17–L207. An L-glutamine-binding site is contributed by G66 to G68. Residue C96 is the Nucleophile; for GATase activity of the active site. An L-glutamine-binding site is contributed by S146–L147. Residues H187 and E189 contribute to the active site.

Tetramer of two components I and two components II.

It carries out the reaction chorismate + L-glutamine = anthranilate + pyruvate + L-glutamate + H(+). Its pathway is amino-acid biosynthesis; L-tryptophan biosynthesis; L-tryptophan from chorismate: step 1/5. The sequence is that of Anthranilate synthase component II (trpG1) from Haloarcula marismortui (strain ATCC 43049 / DSM 3752 / JCM 8966 / VKM B-1809) (Halobacterium marismortui).